A 157-amino-acid polypeptide reads, in one-letter code: MAKKDKKPKVNTIVTKDGESLKVFEDLNDFEMFIKNETEDEEFDHIHCKLTYYPPFVLHESHDDPEKIKDTNNSHNKKFVRHLHQHVEKHLLKDIKEALHKPELKFHDKSKDETFEHIVWHYGEETEYHDRKFRIQVTVTCNHDDAMVDVDYKTIPL.

Belongs to the RGI1 family.

It is found in the cell membrane. Involved in the control of energetic metabolism and significantly contribute to cell fitness, especially under respiratory growth conditions. This Candida glabrata (strain ATCC 2001 / BCRC 20586 / JCM 3761 / NBRC 0622 / NRRL Y-65 / CBS 138) (Yeast) protein is Respiratory growth induced protein 1 (RGI1).